A 506-amino-acid polypeptide reads, in one-letter code: Gamma-aminobutyric acid receptor subunit epsilon (506 aa).

A signal peptide spans 1 to 22; the sequence is MLSKVLPVLLGILLILQSRVEG. Residues 23–66 are disordered; it reads PQTESKNEASSRDVVYGPQPQPLENQLLSEETKSTETETGSRVG. At 23–280 the chain is on the extracellular side; that stretch reads PQTESKNEAS…FNVSRRFGYV (258 aa). A glycan (N-linked (GlcNAc...) asparagine) is linked at Asn-134. A disulfide bond links Cys-195 and Cys-209. N-linked (GlcNAc...) asparagine glycosylation is present at Asn-252. Residues 281-301 form a helical membrane-spanning segment; that stretch reads AFQNYVPSSVTTMLSWVSFWI. Over 302–307 the chain is Cytoplasmic; sequence KTESAP. Residues 308–327 form a helical membrane-spanning segment; that stretch reads ARTSLGITSVLTMTTLGTFS. The Extracellular segment spans residues 328–343; that stretch reads RKNFPRVSYITALDFY. A helical transmembrane segment spans residues 344–364; the sequence is IAICFVFCFCALLEFAVLNFL. Residues 365-485 lie on the Cytoplasmic side of the membrane; that stretch reads IYNQTKAHAS…HVYRLDNYSR (121 aa). Residues 413–438 are disordered; it reads EGSDGEERPSCSAQQPPSPGSPEGPR. The chain crosses the membrane as a helical span at residues 486–506; that stretch reads VVFPVTFFFFNVLYWLVCLNL.

Belongs to the ligand-gated ion channel (TC 1.A.9) family. Gamma-aminobutyric acid receptor (TC 1.A.9.5) subfamily. GABRE sub-subfamily. In terms of assembly, heteropentamer, formed by a combination of alpha (GABRA1-6), beta (GABRB1-3), gamma (GABRG1-3), delta (GABRD), epsilon (GABRE), rho (GABRR1-3), pi (GABRP) and theta (GABRQ) chains, each subunit exhibiting distinct physiological and pharmacological properties. Expressed in many tissues. Highest levels of expression in adult heart and placenta.

The protein resides in the cell membrane. The protein localises to the postsynaptic cell membrane. It carries out the reaction chloride(in) = chloride(out). Potentiated by pentobarbital, loreclezole, and lanthanum and inhibited by zinc and furosemide. Introduction of the epsilon subunit to the receptor complex resulted in diminished modulatory effects by etomidate, propofol, pregnanolone and flurazepam. In terms of biological role, epsilon subunit of the heteropentameric ligand-gated chloride channel gated by gamma-aminobutyric acid (GABA), a major inhibitory neurotransmitter in the brain. GABA-gated chloride channels, also named GABA(A) receptors (GABAAR), consist of five subunits arranged around a central pore and contain GABA active binding site(s) located at the alpha and beta subunit interfaces. When activated by GABA, GABAARs selectively allow the flow of chloride anions across the cell membrane down their electrochemical gradient. GABAARs containing epsilon subunits also permit spontaneous chloride channel activity while preserving the structural information required for GABA-gated openings. GABARs containing epsilon subunit may regulate cardiac function. In Homo sapiens (Human), this protein is Gamma-aminobutyric acid receptor subunit epsilon.